A 193-amino-acid chain; its full sequence is Potassium-transporting ATPase KdpC subunit (193 aa).

Residues 7–27 (PLVVIFAVLTVVTGMAYPAVM) form a helical membrane-spanning segment.

This sequence belongs to the KdpC family. The system is composed of three essential subunits: KdpA, KdpB and KdpC.

The protein resides in the cell inner membrane. In terms of biological role, part of the high-affinity ATP-driven potassium transport (or Kdp) system, which catalyzes the hydrolysis of ATP coupled with the electrogenic transport of potassium into the cytoplasm. This subunit acts as a catalytic chaperone that increases the ATP-binding affinity of the ATP-hydrolyzing subunit KdpB by the formation of a transient KdpB/KdpC/ATP ternary complex. In Burkholderia vietnamiensis (strain G4 / LMG 22486) (Burkholderia cepacia (strain R1808)), this protein is Potassium-transporting ATPase KdpC subunit.